A 277-amino-acid chain; its full sequence is 4-hydroxy-3-methylbut-2-enyl diphosphate reductase (277 aa).

Residue Cys12 coordinates [4Fe-4S] cluster. (2E)-4-hydroxy-3-methylbut-2-enyl diphosphate is bound by residues His36 and His70. 2 residues coordinate dimethylallyl diphosphate: His36 and His70. Isopentenyl diphosphate is bound by residues His36 and His70. Cys92 provides a ligand contact to [4Fe-4S] cluster. His120 serves as a coordination point for (2E)-4-hydroxy-3-methylbut-2-enyl diphosphate. His120 is a dimethylallyl diphosphate binding site. His120 lines the isopentenyl diphosphate pocket. Residue Glu122 is the Proton donor of the active site. A (2E)-4-hydroxy-3-methylbut-2-enyl diphosphate-binding site is contributed by Thr158. Cys186 serves as a coordination point for [4Fe-4S] cluster. (2E)-4-hydroxy-3-methylbut-2-enyl diphosphate contacts are provided by Ser214, Asn216, and Ser258. Ser214, Asn216, and Ser258 together coordinate dimethylallyl diphosphate. 3 residues coordinate isopentenyl diphosphate: Ser214, Asn216, and Ser258.

Belongs to the IspH family. Requires [4Fe-4S] cluster as cofactor.

It carries out the reaction isopentenyl diphosphate + 2 oxidized [2Fe-2S]-[ferredoxin] + H2O = (2E)-4-hydroxy-3-methylbut-2-enyl diphosphate + 2 reduced [2Fe-2S]-[ferredoxin] + 2 H(+). The enzyme catalyses dimethylallyl diphosphate + 2 oxidized [2Fe-2S]-[ferredoxin] + H2O = (2E)-4-hydroxy-3-methylbut-2-enyl diphosphate + 2 reduced [2Fe-2S]-[ferredoxin] + 2 H(+). It participates in isoprenoid biosynthesis; dimethylallyl diphosphate biosynthesis; dimethylallyl diphosphate from (2E)-4-hydroxy-3-methylbutenyl diphosphate: step 1/1. Its pathway is isoprenoid biosynthesis; isopentenyl diphosphate biosynthesis via DXP pathway; isopentenyl diphosphate from 1-deoxy-D-xylulose 5-phosphate: step 6/6. Its function is as follows. Catalyzes the conversion of 1-hydroxy-2-methyl-2-(E)-butenyl 4-diphosphate (HMBPP) into a mixture of isopentenyl diphosphate (IPP) and dimethylallyl diphosphate (DMAPP). Acts in the terminal step of the DOXP/MEP pathway for isoprenoid precursor biosynthesis. This chain is 4-hydroxy-3-methylbut-2-enyl diphosphate reductase, found in Campylobacter jejuni subsp. jejuni serotype O:23/36 (strain 81-176).